The sequence spans 409 residues: Tryptophan synthase beta chain (409 aa).

N6-(pyridoxal phosphate)lysine is present on Lys-100.

It belongs to the TrpB family. In terms of assembly, tetramer of two alpha and two beta chains. Requires pyridoxal 5'-phosphate as cofactor.

It catalyses the reaction (1S,2R)-1-C-(indol-3-yl)glycerol 3-phosphate + L-serine = D-glyceraldehyde 3-phosphate + L-tryptophan + H2O. It participates in amino-acid biosynthesis; L-tryptophan biosynthesis; L-tryptophan from chorismate: step 5/5. In terms of biological role, the beta subunit is responsible for the synthesis of L-tryptophan from indole and L-serine. In Pyrobaculum arsenaticum (strain DSM 13514 / JCM 11321 / PZ6), this protein is Tryptophan synthase beta chain.